The primary structure comprises 309 residues: Anamorsin (309 aa).

The segment at 6 to 172 (ISPGQLVAVF…KPNFEVGSSS (167 aa)) is N-terminal SAM-like domain. Residues 173 to 222 (QLKLLHKKSSSVKPVVDPATAKLWTLSANDMEDDSMDLIDSDELLDPEDL) are linker. Phosphoserine is present on residues S182, S183, and S213. C235, C244, C247, and C249 together coordinate [2Fe-2S] cluster. Residues 235–249 (CGEGKKRKACKNCTC) form a fe-S binding site A region. At S269 the chain carries Phosphoserine. Residues C271, C274, C282, and C285 each coordinate [4Fe-4S] cluster. Short sequence motifs (cx2C motif) lie at residues 271–274 (CGNC) and 282–285 (CANC). The segment at 271 to 285 (CGNCYLGDAFRCANC) is fe-S binding site B. Phosphoserine is present on residues S302 and S304.

This sequence belongs to the anamorsin family. As to quaternary structure, monomer. Interacts with NDOR1. Interacts with CHCHD4. It depends on [2Fe-2S] cluster as a cofactor. The cofactor is [4Fe-4S] cluster.

The protein localises to the cytoplasm. It localises to the nucleus. Its subcellular location is the mitochondrion intermembrane space. Component of the cytosolic iron-sulfur (Fe-S) protein assembly (CIA) machinery required for the maturation of extramitochondrial Fe-S proteins. Part of an electron transfer chain functioning in an early step of cytosolic Fe-S biogenesis, facilitating the de novo assembly of a [4Fe-4S] cluster on the scaffold complex NUBP1-NUBP2. Electrons are transferred to CIAPIN1 from NADPH via the FAD- and FMN-containing protein NDOR1. NDOR1-CIAPIN1 are also required for the assembly of the diferric tyrosyl radical cofactor of ribonucleotide reductase (RNR), probably by providing electrons for reduction during radical cofactor maturation in the catalytic small subunit. Has anti-apoptotic effects in the cell. Involved in negative control of cell death upon cytokine withdrawal. Promotes development of hematopoietic cells. The sequence is that of Anamorsin from Rattus norvegicus (Rat).